The chain runs to 675 residues: Methionine--tRNA ligase (675 aa).

The 'HIGH' region motif lies at 15–25 (PYANGSIHLGH). 4 residues coordinate Zn(2+): Cys146, Cys149, Cys159, and Cys162. Residues 332 to 336 (KMSKS) carry the 'KMSKS' region motif. Lys335 is an ATP binding site. One can recognise a tRNA-binding domain in the interval 573-675 (DFAKIDMRIA…SGAKPGHQVK (103 aa)).

The protein belongs to the class-I aminoacyl-tRNA synthetase family. MetG type 1 subfamily. Homodimer. Zn(2+) is required as a cofactor.

Its subcellular location is the cytoplasm. It catalyses the reaction tRNA(Met) + L-methionine + ATP = L-methionyl-tRNA(Met) + AMP + diphosphate. Functionally, is required not only for elongation of protein synthesis but also for the initiation of all mRNA translation through initiator tRNA(fMet) aminoacylation. In Proteus mirabilis (strain HI4320), this protein is Methionine--tRNA ligase.